The chain runs to 397 residues: Elongation factor Tu (397 aa).

A tr-type G domain is found at 10–207; the sequence is KPHVNVGTVG…AIDAYVPDPV (198 aa). Residues 19–26 are G1; it reads GHIDHGKT. 19–26 is a GTP binding site; the sequence is GHIDHGKT. Thr26 lines the Mg(2+) pocket. The segment at 60-64 is G2; sequence GITIA. The G3 stretch occupies residues 81 to 84; that stretch reads DCPG. GTP is bound by residues 81–85 and 136–139; these read DCPGH and NKVD. The segment at 136–139 is G4; the sequence is NKVD. Residues 174–176 are G5; it reads SAL.

The protein belongs to the TRAFAC class translation factor GTPase superfamily. Classic translation factor GTPase family. EF-Tu/EF-1A subfamily. As to quaternary structure, monomer.

The protein localises to the cytoplasm. It catalyses the reaction GTP + H2O = GDP + phosphate + H(+). Its function is as follows. GTP hydrolase that promotes the GTP-dependent binding of aminoacyl-tRNA to the A-site of ribosomes during protein biosynthesis. In Syntrophobacter fumaroxidans (strain DSM 10017 / MPOB), this protein is Elongation factor Tu.